Reading from the N-terminus, the 561-residue chain is MSMENFAQLLEESFTLQEMNPGEVITAEVVAIDQNFVTVNAGLKSESLIDVAEFKNAQGEIEVKVGDFVTVTIESVENGFGETKLSREKAKRAADWIALEEAMENGDILSGIINGKVKGGLTVMISSIRAFLPGSLVDVRPVKDTSHFEGKEIEFKVIKLDKKRNNVVVSRRAVLEATLGEERKALLENLQEGSVIKGIVKNITDYGAFVDLGGIDGLLHITDLAWRRVKHPSEVLEVGQEVEAKVLKFDQEKQRVSLGMKQLGEDPWSGLTRRYPQGTRLFGKVSNLTDYGAFVEIEQGIEGLVHVSEMDWTNKNVHPSKVVQLGDEVEVMILEIDEGRRRISLGMKQCQANPWEEFAANHNKGDKISGAVKSITDFGVFVGLPGGIDGLVHLSDLSWTESGEEAVRKYKKGEEVEAVVLAIDVEKERISLGIKQLEGDPFGNFISVNDKGSLVKGSVKSVDAKGAVIALSDEVEGYLPASEFAADRVEDLTTKLKEGDEVEAVIVTVDRKNRSIKLSVKAKDAKESREALNSVNAAANANAGTTSLGDLLKAKLSGEQE.

6 consecutive S1 motif domains span residues 22–88 (GEVI…LSRE), 106–172 (GDIL…VSRR), 193–261 (GSVI…LGMK), 278–348 (GTRL…LGMK), 365–435 (GDKI…LGIK), and 452–521 (GSLV…LSVK).

The protein belongs to the bacterial ribosomal protein bS1 family.

Functionally, binds mRNA; thus facilitating recognition of the initiation point. It is needed to translate mRNA with a short Shine-Dalgarno (SD) purine-rich sequence. This chain is Small ribosomal subunit protein bS1 (rpsA), found in Neisseria meningitidis serogroup B (strain ATCC BAA-335 / MC58).